Reading from the N-terminus, the 187-residue chain is Avirulence protein ATR39-2 (187 aa).

The first 20 residues, 1-20 (MVKCTPLLALTVIVSAGSDA), serve as a signal peptide directing secretion. The RxLR-dEER signature appears at 49–66 (RVLRASDVPNEVAAGESR).

This sequence belongs to the RxLR effector family.

Its subcellular location is the secreted. It is found in the host cell. Its function is as follows. Secreted effector that acts as an elicitor of hypersensitive response (HR) specifically on plants carrying defense protein RPP39. The allele ATR39-1 is recognized by RPP39, whereas the ATR39-2 allele is nor recognized. The sequence is that of Avirulence protein ATR39-2 from Hyaloperonospora arabidopsidis (strain Emoy2) (Downy mildew agent).